The following is a 200-amino-acid chain: Molybdopterin synthase catalytic subunit (200 aa).

The segment covering 16–30 (KLPSSHQSVEDSASE) has biased composition (polar residues). Residues 16-43 (KLPSSHQSVEDSASEPSGYEAKDPPQDT) are disordered. S20 is modified (phosphoserine). Substrate is bound by residues 154-155 (HR), K170, and 177-179 (KKE).

This sequence belongs to the MoaE family. MOCS2B subfamily. Heterotetramer; composed of 2 small (MOCS2A) and 2 large (MOCS2B) subunits.

Its subcellular location is the cytoplasm. It localises to the cytosol. It carries out the reaction 2 [molybdopterin-synthase sulfur-carrier protein]-C-terminal-Gly-aminoethanethioate + cyclic pyranopterin phosphate + H2O = molybdopterin + 2 [molybdopterin-synthase sulfur-carrier protein]-C-terminal Gly-Gly + 2 H(+). The protein operates within cofactor biosynthesis; molybdopterin biosynthesis. In terms of biological role, catalytic subunit of the molybdopterin synthase complex, a complex that catalyzes the conversion of precursor Z into molybdopterin. Acts by mediating the incorporation of 2 sulfur atoms from thiocarboxylated MOCS2A into precursor Z to generate a dithiolene group. The polypeptide is Molybdopterin synthase catalytic subunit (Rattus norvegicus (Rat)).